A 226-amino-acid chain; its full sequence is X-linked lymphocyte-regulated protein 3A (226 aa).

Positions 1–18 (MSSRERKATDTAGRHSRM) are enriched in basic and acidic residues. The segment at 1 to 72 (MSSRERKATD…QDLVQEFEEP (72 aa)) is disordered. The segment covering 21-30 (NLSSDDSQNP) has biased composition (polar residues). Basic and acidic residues-rich tracts occupy residues 39-48 (EVLDAGREDI) and 56-65 (QQARKEKQDL). The stretch at 155 to 210 (ETLTLQKNRMEEFKSLCEKYLEKLEVLRDSRGNSIAEELRRLIATLEIKLLMLHNQ) forms a coiled coil.

Belongs to the XLR/SYCP3 family. Expressed in lymphoid cells.

This Mus musculus (Mouse) protein is X-linked lymphocyte-regulated protein 3A (Xlr3a).